Consider the following 371-residue polypeptide: Protein OSB2, chloroplastic (371 aa).

The transit peptide at 1–20 (MSLISKSLARIECSPFFYPR) directs the protein to the chloroplast. A disordered region spans residues 45–64 (GKTGNGERKQRAKAPAKTPE). The 99-residue stretch at 97 to 195 (VANWVNLIGF…VLVQNLNFIQ (99 aa)) folds into the SSB domain. PDF region stretches follow at residues 237-289 (WNHL…PKLE) and 312-360 (WKDL…PKLP).

In terms of tissue distribution, expressed in the floral abscission zone.

The protein localises to the plastid. It localises to the chloroplast. Functionally, binds preferentially single-stranded DNA. Does not bind to RNA. This chain is Protein OSB2, chloroplastic (OSB2), found in Arabidopsis thaliana (Mouse-ear cress).